The chain runs to 712 residues: Protein TAPT1 homolog (712 aa).

Low complexity predominate over residues 1 to 21; sequence MNNVPSTSRENSRNPSESSSS. 2 disordered regions span residues 1–22 and 44–66; these read MNNVPSTSRENSRNPSESSSSI and ITMSAPPSPATPRKIDFSAEIET. The next 7 membrane-spanning stretches (helical) occupy residues 196–216, 222–242, 305–325, 379–399, 402–422, 470–490, and 497–517; these read FFYLFTFLPLRFLMSIFGALL, TSAETCDFLKVVIIVAASMLI, TCGHLIVAILYATLHSFLVIL, HIFALLFVVMIRNMTAVNWNI, FTEMIPDIIMVVGCEYFVDWL, GFIPIPLSIMIIRVLSQTFTL, and IIFGIGWLLVFAVKICNGVVM. The segment covering 596–619 has biased composition (basic and acidic residues); that stretch reads EIRRSTDRETAVSHLTARSDERTP. A disordered region spans residues 596-712; that stretch reads EIRRSTDRET…MPEQGVQRIE (117 aa). Positions 656–667 are enriched in polar residues; sequence TENNTNSNSEQA. The span at 675-692 shows a compositional bias: low complexity; sequence TAAPVTSSASTNTNATSS.

It belongs to the TAPT1 family.

Its subcellular location is the membrane. This is Protein TAPT1 homolog from Caenorhabditis elegans.